A 455-amino-acid chain; its full sequence is Ribosomal protein uS12 methylthiotransferase RimO (455 aa).

The 111-residue stretch at 30–140 (PTIGMVSLGC…VLDAVHGAVP (111 aa)) folds into the MTTase N-terminal domain. Residues Cys-39, Cys-75, Cys-104, Cys-171, Cys-175, and Cys-178 each contribute to the [4Fe-4S] cluster site. The 230-residue stretch at 157–386 (LTPRHFSYLK…MEKAQAISEA (230 aa)) folds into the Radical SAM core domain. The TRAM domain occupies 389-455 (AAKVGRRIEV…GEYDLWGRPV (67 aa)).

It belongs to the methylthiotransferase family. RimO subfamily. It depends on [4Fe-4S] cluster as a cofactor.

It localises to the cytoplasm. The catalysed reaction is L-aspartate(89)-[ribosomal protein uS12]-hydrogen + (sulfur carrier)-SH + AH2 + 2 S-adenosyl-L-methionine = 3-methylsulfanyl-L-aspartate(89)-[ribosomal protein uS12]-hydrogen + (sulfur carrier)-H + 5'-deoxyadenosine + L-methionine + A + S-adenosyl-L-homocysteine + 2 H(+). Its function is as follows. Catalyzes the methylthiolation of an aspartic acid residue of ribosomal protein uS12. The protein is Ribosomal protein uS12 methylthiotransferase RimO of Cereibacter sphaeroides (strain ATCC 17029 / ATH 2.4.9) (Rhodobacter sphaeroides).